A 116-amino-acid polypeptide reads, in one-letter code: Large ribosomal subunit protein bL17 (116 aa).

The protein belongs to the bacterial ribosomal protein bL17 family. Part of the 50S ribosomal subunit. Contacts protein L32.

The chain is Large ribosomal subunit protein bL17 from Synechococcus sp. (strain RCC307).